The chain runs to 2386 residues: Protein kinase rad3 (2386 aa).

An FAT domain is found at 1386-1943; sequence TLGIVSLNCG…LWQLMATIKS (558 aa). Positions 2052 to 2370 constitute a PI3K/PI4K catalytic domain; sequence FEDEVDIMNS…QIQELIKSAV (319 aa). A G-loop region spans residues 2058–2064; that stretch reads IMNSLQK. A catalytic loop region spans residues 2227–2235; the sequence is GLGDRHGEN. Positions 2247-2271 are activation loop; sequence HVDFNCLFDKGLTFEKPEKVPFRLT. The FATC domain occupies 2354–2386; it reads IPLSIEGQIQELIKSAVNPKNLVEMYIGWAAYF.

It belongs to the PI3/PI4-kinase family. ATM subfamily. In terms of assembly, interacts with crb2 (via BRCT domain). Interacts with chk1.

It is found in the nucleus. The enzyme catalyses L-seryl-[protein] + ATP = O-phospho-L-seryl-[protein] + ADP + H(+). It carries out the reaction L-threonyl-[protein] + ATP = O-phospho-L-threonyl-[protein] + ADP + H(+). Serine/threonine kinase which activates checkpoint signaling upon genotoxic stresses. Involved in G2 arrest following DNA damage where it phosphorylates chk1. Phosphorylation of 'Thr-73' and 'Ser-80' of checkpoint mediator crb2 promotes its interaction with chk1. It is also involved in the dependence of mitosis on the completion of DNA replication. The chain is Protein kinase rad3 (rad3) from Schizosaccharomyces pombe (strain 972 / ATCC 24843) (Fission yeast).